A 166-amino-acid polypeptide reads, in one-letter code: Photosystem I assembly protein Ycf3 (166 aa).

TPR repeat units follow at residues A35–A68, S72–L105, and G120–S153.

Belongs to the Ycf3 family.

It localises to the plastid. The protein resides in the chloroplast thylakoid membrane. Its function is as follows. Essential for the assembly of the photosystem I (PSI) complex. May act as a chaperone-like factor to guide the assembly of the PSI subunits. In Bigelowiella natans (Pedinomonas minutissima), this protein is Photosystem I assembly protein Ycf3.